Reading from the N-terminus, the 356-residue chain is Nicotinate-nucleotide--dimethylbenzimidazole phosphoribosyltransferase (356 aa).

The active-site Proton acceptor is glutamate 317.

The protein belongs to the CobT family. In terms of assembly, homodimer.

It catalyses the reaction 5,6-dimethylbenzimidazole + nicotinate beta-D-ribonucleotide = alpha-ribazole 5'-phosphate + nicotinate + H(+). The protein operates within nucleoside biosynthesis; alpha-ribazole biosynthesis; alpha-ribazole from 5,6-dimethylbenzimidazole: step 1/2. In terms of biological role, catalyzes the synthesis of alpha-ribazole-5'-phosphate from nicotinate mononucleotide (NAMN) and 5,6-dimethylbenzimidazole (DMB). The sequence is that of Nicotinate-nucleotide--dimethylbenzimidazole phosphoribosyltransferase from Salmonella schwarzengrund (strain CVM19633).